The following is a 307-amino-acid chain: Putative S-adenosyl-L-methionine-dependent methyltransferase Mflv_5025 (307 aa).

S-adenosyl-L-methionine is bound by residues Asp130 and 159–160 (DL).

This sequence belongs to the UPF0677 family.

Its function is as follows. Exhibits S-adenosyl-L-methionine-dependent methyltransferase activity. This is Putative S-adenosyl-L-methionine-dependent methyltransferase Mflv_5025 from Mycolicibacterium gilvum (strain PYR-GCK) (Mycobacterium gilvum (strain PYR-GCK)).